The primary structure comprises 155 residues: Small ribosomal subunit protein uS7c (155 aa).

It belongs to the universal ribosomal protein uS7 family. As to quaternary structure, part of the 30S ribosomal subunit.

Its subcellular location is the plastid. The protein resides in the chloroplast. Functionally, one of the primary rRNA binding proteins, it binds directly to 16S rRNA where it nucleates assembly of the head domain of the 30S subunit. This Spirogyra maxima (Green alga) protein is Small ribosomal subunit protein uS7c (rps7).